The primary structure comprises 376 residues: Dual-specificity RNA methyltransferase RlmN (376 aa).

Glutamate 96 functions as the Proton acceptor in the catalytic mechanism. One can recognise a Radical SAM core domain in the interval 102–341 (DEDRATLCVS…VVVRKTRGDD (240 aa)). An intrachain disulfide couples cysteine 109 to cysteine 346. Positions 116, 120, and 123 each coordinate [4Fe-4S] cluster. S-adenosyl-L-methionine is bound by residues 170-171 (GE), serine 202, 224-226 (SLH), and asparagine 303. The active-site S-methylcysteine intermediate is cysteine 346.

It belongs to the radical SAM superfamily. RlmN family. [4Fe-4S] cluster serves as cofactor.

The protein resides in the cytoplasm. It catalyses the reaction adenosine(2503) in 23S rRNA + 2 reduced [2Fe-2S]-[ferredoxin] + 2 S-adenosyl-L-methionine = 2-methyladenosine(2503) in 23S rRNA + 5'-deoxyadenosine + L-methionine + 2 oxidized [2Fe-2S]-[ferredoxin] + S-adenosyl-L-homocysteine. The enzyme catalyses adenosine(37) in tRNA + 2 reduced [2Fe-2S]-[ferredoxin] + 2 S-adenosyl-L-methionine = 2-methyladenosine(37) in tRNA + 5'-deoxyadenosine + L-methionine + 2 oxidized [2Fe-2S]-[ferredoxin] + S-adenosyl-L-homocysteine. Its function is as follows. Specifically methylates position 2 of adenine 2503 in 23S rRNA and position 2 of adenine 37 in tRNAs. m2A2503 modification seems to play a crucial role in the proofreading step occurring at the peptidyl transferase center and thus would serve to optimize ribosomal fidelity. The sequence is that of Dual-specificity RNA methyltransferase RlmN from Pseudoalteromonas atlantica (strain T6c / ATCC BAA-1087).